The primary structure comprises 110 residues: Small ribosomal subunit protein uS10m (110 aa).

It belongs to the universal ribosomal protein uS10 family.

Its subcellular location is the mitochondrion. This chain is Small ribosomal subunit protein uS10m (RPS10), found in Pisum sativum (Garden pea).